Consider the following 284-residue polypeptide: Spermidine synthase (284 aa).

A PABS domain is found at 6 to 241 (NGWFSEISEF…GSIGFILCSL (236 aa)). Q37 provides a ligand contact to S-adenosyl 3-(methylsulfanyl)propylamine. Y67 is a putrescine binding site. S-adenosyl 3-(methylsulfanyl)propylamine contacts are provided by residues Q68, D92, E112, 143–144 (DG), and D161. The active-site Proton acceptor is D161. Putrescine is bound by residues 161 to 164 (DSSD) and Y229.

This sequence belongs to the spermidine/spermine synthase family.

The catalysed reaction is S-adenosyl 3-(methylsulfanyl)propylamine + putrescine = S-methyl-5'-thioadenosine + spermidine + H(+). Its pathway is amine and polyamine biosynthesis; spermidine biosynthesis; spermidine from putrescine: step 1/1. Catalyzes the production of spermidine from putrescine and decarboxylated S-adenosylmethionine (dcSAM). Has a strong preference for putrescine as substrate. The polypeptide is Spermidine synthase (spsA) (Dictyostelium discoideum (Social amoeba)).